Here is a 116-residue protein sequence, read N- to C-terminus: Putative pterin-4-alpha-carbinolamine dehydratase (116 aa).

Belongs to the pterin-4-alpha-carbinolamine dehydratase family.

The enzyme catalyses (4aS,6R)-4a-hydroxy-L-erythro-5,6,7,8-tetrahydrobiopterin = (6R)-L-erythro-6,7-dihydrobiopterin + H2O. The chain is Putative pterin-4-alpha-carbinolamine dehydratase from Xylella fastidiosa (strain M23).